Consider the following 440-residue polypeptide: Enolase (440 aa).

An igE-binding determinant region spans residues 120 to 189 (KAAAAEKRVP…TEAMRQGAEV (70 aa)). Residues His-159 and Glu-168 each contribute to the substrate site. Glu-211 serves as the catalytic Proton donor. Residues Asp-246, Glu-297, and Asp-324 each contribute to the Mg(2+) site. Substrate is bound by residues Glu-297 and Asp-324. Lys-349 (proton acceptor) is an active-site residue. Residues 376-379 (SHRS) and Lys-400 each bind substrate.

Belongs to the enolase family. In terms of assembly, homodimer. Mg(2+) serves as cofactor.

It is found in the cytoplasm. It catalyses the reaction (2R)-2-phosphoglycerate = phosphoenolpyruvate + H2O. The protein operates within carbohydrate degradation; glycolysis; pyruvate from D-glyceraldehyde 3-phosphate: step 4/5. The polypeptide is Enolase (ENO) (Davidiella tassiana (Mycosphaerella tassiana)).